We begin with the raw amino-acid sequence, 185 residues long: Bcl-2-modifying factor (185 aa).

Residues 1–28 (MEPPQCVEELEDDVFQSEDGEPGTQPGG) form a disordered region. The span at 8–21 (EELEDDVFQSEDGE) shows a compositional bias: acidic residues. Residues 67-75 (DKATQTLSP) are interaction with DLC2. The BH3 motif lies at 134–148 (IARKLQCIADQFHRL).

It belongs to the Bcl-2 family. In terms of assembly, interacts with MCL1, BCL2, BCL2L1/BCL-Xl, BCL2A1 and BCL2L2/BCL-w. Interacts with the myosin V actin motor complex through its binding to DLC2. As to expression, widely expressed with an abundant expression in pancreas, liver kidney and hematopoietic tissues.

In terms of biological role, may play a role in apoptosis. In Mus musculus (Mouse), this protein is Bcl-2-modifying factor (Bmf).